The primary structure comprises 515 residues: 2-isopropylmalate synthase (515 aa).

In terms of domain architecture, Pyruvate carboxyltransferase spans 5–268 (VIIFDTTLRD…VCGIDASQIV (264 aa)). Mn(2+) contacts are provided by aspartate 14, histidine 202, histidine 204, and asparagine 239. The regulatory domain stretch occupies residues 394–515 (HFISLSQHSE…QAKLNAQMAP (122 aa)).

It belongs to the alpha-IPM synthase/homocitrate synthase family. LeuA type 1 subfamily. As to quaternary structure, homodimer. It depends on Mn(2+) as a cofactor.

The protein resides in the cytoplasm. It catalyses the reaction 3-methyl-2-oxobutanoate + acetyl-CoA + H2O = (2S)-2-isopropylmalate + CoA + H(+). Its pathway is amino-acid biosynthesis; L-leucine biosynthesis; L-leucine from 3-methyl-2-oxobutanoate: step 1/4. In terms of biological role, catalyzes the condensation of the acetyl group of acetyl-CoA with 3-methyl-2-oxobutanoate (2-ketoisovalerate) to form 3-carboxy-3-hydroxy-4-methylpentanoate (2-isopropylmalate). The sequence is that of 2-isopropylmalate synthase from Polynucleobacter asymbioticus (strain DSM 18221 / CIP 109841 / QLW-P1DMWA-1) (Polynucleobacter necessarius subsp. asymbioticus).